We begin with the raw amino-acid sequence, 284 residues long: 2-dehydro-3-deoxyphosphooctonate aldolase (284 aa).

This sequence belongs to the KdsA family.

It is found in the cytoplasm. The catalysed reaction is D-arabinose 5-phosphate + phosphoenolpyruvate + H2O = 3-deoxy-alpha-D-manno-2-octulosonate-8-phosphate + phosphate. The protein operates within carbohydrate biosynthesis; 3-deoxy-D-manno-octulosonate biosynthesis; 3-deoxy-D-manno-octulosonate from D-ribulose 5-phosphate: step 2/3. It participates in bacterial outer membrane biogenesis; lipopolysaccharide biosynthesis. The chain is 2-dehydro-3-deoxyphosphooctonate aldolase from Proteus mirabilis (strain HI4320).